The sequence spans 542 residues: CTP synthase (542 aa).

An amidoligase domain region spans residues 1-265 (MARYVFITGG…DSEVLCAFGI (265 aa)). Residue Ser13 coordinates CTP. UTP is bound at residue Ser13. Residue 14–19 (SLGKGI) coordinates ATP. Position 54 (Tyr54) interacts with L-glutamine. Residue Asp71 coordinates ATP. The Mg(2+) site is built by Asp71 and Glu139. CTP contacts are provided by residues 146–148 (DIE), 186–191 (KTKPTQ), and Lys222. UTP contacts are provided by residues 186-191 (KTKPTQ) and Lys222. In terms of domain architecture, Glutamine amidotransferase type-1 spans 291-541 (TIAVVGKYTG…IEAAVEQSRL (251 aa)). Ala353 serves as a coordination point for L-glutamine. The active-site Nucleophile; for glutamine hydrolysis is Cys380. Residues 381-384 (FGMQ), Glu404, and Arg469 contribute to the L-glutamine site. Catalysis depends on residues His514 and Glu516.

It belongs to the CTP synthase family. As to quaternary structure, homotetramer.

It carries out the reaction UTP + L-glutamine + ATP + H2O = CTP + L-glutamate + ADP + phosphate + 2 H(+). It catalyses the reaction L-glutamine + H2O = L-glutamate + NH4(+). The enzyme catalyses UTP + NH4(+) + ATP = CTP + ADP + phosphate + 2 H(+). It functions in the pathway pyrimidine metabolism; CTP biosynthesis via de novo pathway; CTP from UDP: step 2/2. With respect to regulation, allosterically activated by GTP, when glutamine is the substrate; GTP has no effect on the reaction when ammonia is the substrate. The allosteric effector GTP functions by stabilizing the protein conformation that binds the tetrahedral intermediate(s) formed during glutamine hydrolysis. Inhibited by the product CTP, via allosteric rather than competitive inhibition. Its function is as follows. Catalyzes the ATP-dependent amination of UTP to CTP with either L-glutamine or ammonia as the source of nitrogen. Regulates intracellular CTP levels through interactions with the four ribonucleotide triphosphates. The sequence is that of CTP synthase from Bartonella tribocorum (strain CIP 105476 / IBS 506).